Reading from the N-terminus, the 141-residue chain is Large ribosomal subunit protein uL16 (141 aa).

Residues Met-1–Asn-17 show a composition bias toward basic residues. The tract at residues Met-1–Thr-22 is disordered.

It belongs to the universal ribosomal protein uL16 family. Part of the 50S ribosomal subunit.

Its function is as follows. Binds 23S rRNA and is also seen to make contacts with the A and possibly P site tRNAs. The sequence is that of Large ribosomal subunit protein uL16 from Campylobacter curvus (strain 525.92).